A 793-amino-acid polypeptide reads, in one-letter code: Serine/threonine-protein kinase MARK1 (793 aa).

A disordered region spans residues Met1–Ile40. Thr5 is modified (phosphothreonine). One can recognise a Protein kinase domain in the interval Tyr60–Met311. Residues Ile66–Val74 and Lys89 contribute to the ATP site. Asp182 functions as the Proton acceptor in the catalytic mechanism. Thr208 is subject to Phosphothreonine. Phosphothreonine; by LKB1 and TAOK1 is present on Thr215. A Phosphoserine; by GSK3-beta modification is found at Ser219. A UBA domain is found at Asp329 to Arg370. Disordered stretches follow at residues Gly377–Met499 and Leu517–Ser697. The span at Ser380–Ser403 shows a compositional bias: polar residues. A phosphoserine mark is found at Ser382, Ser390, Ser393, Ser403, Ser423, and Ser444. Over residues Ser447–Arg459 the composition is skewed to basic and acidic residues. Over residues Gly462–Thr473 the composition is skewed to polar residues. At Ser475 the chain carries Phosphoserine. Residues Ala487–Met499 show a composition bias toward polar residues. Composition is skewed to low complexity over residues Ser523–Ala547 and Pro585–Pro599. The residue at position 588 (Ser588) is a Phosphoserine. Thr613 is modified (phosphothreonine; by PKC/PRKCZ). The segment covering Gly647–Thr657 has biased composition (polar residues). Composition is skewed to basic and acidic residues over residues Val661–Thr676 and Glu683–Pro695. At Ser666 the chain carries Phosphoserine. In terms of domain architecture, KA1 spans Asp744–Leu793.

It belongs to the protein kinase superfamily. CAMK Ser/Thr protein kinase family. SNF1 subfamily. In terms of assembly, interacts with MAPT/TAU. Requires Mg(2+) as cofactor. Phosphorylation at Thr-613 by PRKCZ/aPKC in polarized epithelial cells inhibits the kinase activity. Phosphorylated at Thr-215 by STK11/LKB1 in complex with STE20-related adapter-alpha (STRADA) pseudo kinase and CAB39. Phosphorylation at Thr-215 by TAOK1 activates the kinase activity, leading to phosphorylation and detachment of MAPT/TAU from microtubules. Phosphorylation at Ser-219 by GSK3-beta (GSK3B) inhibits the kinase activity. Highly expressed in brain and spleen and at lower levels in kidney and skeletal muscle.

It localises to the cell membrane. The protein resides in the cytoplasm. It is found in the cytoskeleton. Its subcellular location is the cell projection. The protein localises to the dendrite. It carries out the reaction L-seryl-[protein] + ATP = O-phospho-L-seryl-[protein] + ADP + H(+). The catalysed reaction is L-threonyl-[protein] + ATP = O-phospho-L-threonyl-[protein] + ADP + H(+). It catalyses the reaction L-seryl-[tau protein] + ATP = O-phospho-L-seryl-[tau protein] + ADP + H(+). The enzyme catalyses L-threonyl-[tau protein] + ATP = O-phospho-L-threonyl-[tau protein] + ADP + H(+). With respect to regulation, activated by phosphorylation on Thr-215. Inhibited by phosphorylation at Ser-219. Its function is as follows. Serine/threonine-protein kinase. Involved in cell polarity and microtubule dynamics regulation. Phosphorylates DCX, MAP2 and MAP4. Phosphorylates the microtubule-associated protein MAPT/TAU. Involved in cell polarity by phosphorylating the microtubule-associated proteins MAP2, MAP4 and MAPT/TAU at KXGS motifs, causing detachment from microtubules, and their disassembly. Involved in the regulation of neuronal migration through its dual activities in regulating cellular polarity and microtubule dynamics, possibly by phosphorylating and regulating DCX. Also acts as a positive regulator of the Wnt signaling pathway, probably by mediating phosphorylation of dishevelled proteins (DVL1, DVL2 and/or DVL3). In Rattus norvegicus (Rat), this protein is Serine/threonine-protein kinase MARK1.